Here is a 404-residue protein sequence, read N- to C-terminus: MKLPIYLDYSATCPVDPRVAEKMMQCLTMDGLFGNPASRSHRFGWQAEEAVDLARNQVAELIGADPREIVFTSGATESNNLAIKGVAHFYAGKGKHIVTSKTEHKAVLDTCRQLEREGYEVTYLEPMPNGLFTLEQIEGALRDDTILVSIMHVNNEIGVVQNIAAIGELCRSRKILLHVDAVQSVGKIPVDVEALKVDLLSMSAHKVYGPKGIGALYVRRKPRVRLEAQMHGGGHERGMRSGTLPTHQIVGMGEAFRIAKEEMVSEGQRIMALRQRLWDGIKDIEAVYINGDLEQRVPGNLNVSFAYVEGESLIMALKDLAVSSGSACTSASLEPSYVLRALGLNDELAHSSIRFSMGRFTTEEEIDYAIKLIRDSIGRLREMSPLWEMYKDGVDLNTVEWAHH.

Residues 75–76 (AT), asparagine 155, glutamine 183, and 203–205 (SAH) contribute to the pyridoxal 5'-phosphate site. An N6-(pyridoxal phosphate)lysine modification is found at lysine 206. Residue threonine 243 participates in pyridoxal 5'-phosphate binding. Cysteine 328 acts as the Cysteine persulfide intermediate in catalysis. Cysteine 328 provides a ligand contact to [2Fe-2S] cluster.

This sequence belongs to the class-V pyridoxal-phosphate-dependent aminotransferase family. NifS/IscS subfamily. In terms of assembly, homodimer. Forms a heterotetramer with IscU, interacts with other sulfur acceptors. Pyridoxal 5'-phosphate is required as a cofactor.

It localises to the cytoplasm. It carries out the reaction (sulfur carrier)-H + L-cysteine = (sulfur carrier)-SH + L-alanine. Its pathway is cofactor biosynthesis; iron-sulfur cluster biosynthesis. Functionally, master enzyme that delivers sulfur to a number of partners involved in Fe-S cluster assembly, tRNA modification or cofactor biosynthesis. Catalyzes the removal of elemental sulfur atoms from cysteine to produce alanine. Functions as a sulfur delivery protein for Fe-S cluster synthesis onto IscU, an Fe-S scaffold assembly protein, as well as other S acceptor proteins. This is Cysteine desulfurase IscS from Aeromonas hydrophila subsp. hydrophila (strain ATCC 7966 / DSM 30187 / BCRC 13018 / CCUG 14551 / JCM 1027 / KCTC 2358 / NCIMB 9240 / NCTC 8049).